The primary structure comprises 279 residues: MKTTASFKKMKQQKEKIAMMTAYDAPSARLVEDADVDMILVGDSLGMVVLGYDSTIPVTLDDMIHHTKAVKRGAKNTFIVTDMPYLTYHGSFNETLVGAKRLMQEAGADALKLEGNGDIIDTIERLTLAGVPIVAHLGLTPQNVAVEGGYRVQAKDAKSAKQLLADAKAVEAAGAFALVLECVPEQVATQISEELTIPVIGIGAGAGCDGQVLVYHDVIGYGAGHVPSFVKQYVNITKPIEEAMKQYVQEVKAGTFPDKDHAFSLKENVIQELYGGALT.

Residues Asp43 and Asp82 each contribute to the Mg(2+) site. Residues Asp43–Ser44, Asp82, and Lys112 each bind 3-methyl-2-oxobutanoate. Glu114 is a binding site for Mg(2+). Glu181 (proton acceptor) is an active-site residue.

This sequence belongs to the PanB family. Homodecamer; pentamer of dimers. Mg(2+) serves as cofactor.

The protein localises to the cytoplasm. It catalyses the reaction 3-methyl-2-oxobutanoate + (6R)-5,10-methylene-5,6,7,8-tetrahydrofolate + H2O = 2-dehydropantoate + (6S)-5,6,7,8-tetrahydrofolate. It functions in the pathway cofactor biosynthesis; (R)-pantothenate biosynthesis; (R)-pantoate from 3-methyl-2-oxobutanoate: step 1/2. Its function is as follows. Catalyzes the reversible reaction in which hydroxymethyl group from 5,10-methylenetetrahydrofolate is transferred onto alpha-ketoisovalerate to form ketopantoate. The polypeptide is 3-methyl-2-oxobutanoate hydroxymethyltransferase (Halalkalibacterium halodurans (strain ATCC BAA-125 / DSM 18197 / FERM 7344 / JCM 9153 / C-125) (Bacillus halodurans)).